The chain runs to 173 residues: Photosystem I assembly protein Ycf3 (173 aa).

TPR repeat units lie at residues 36–69 (AFAY…EQGE), 73–106 (SYIL…NPRL), and 121–154 (GELS…APNN).

The protein belongs to the Ycf3 family.

It localises to the cellular thylakoid membrane. Essential for the assembly of the photosystem I (PSI) complex. May act as a chaperone-like factor to guide the assembly of the PSI subunits. This chain is Photosystem I assembly protein Ycf3, found in Synechococcus sp. (strain JA-2-3B'a(2-13)) (Cyanobacteria bacterium Yellowstone B-Prime).